We begin with the raw amino-acid sequence, 267 residues long: L-aspartate dehydrogenase (267 aa).

Ala124 and Asn190 together coordinate NAD(+). The active site involves His218.

The protein belongs to the L-aspartate dehydrogenase family.

The enzyme catalyses L-aspartate + NADP(+) + H2O = oxaloacetate + NH4(+) + NADPH + H(+). The catalysed reaction is L-aspartate + NAD(+) + H2O = oxaloacetate + NH4(+) + NADH + H(+). It participates in cofactor biosynthesis; NAD(+) biosynthesis; iminoaspartate from L-aspartate (dehydrogenase route): step 1/1. In terms of biological role, specifically catalyzes the NAD or NADP-dependent dehydrogenation of L-aspartate to iminoaspartate. The chain is L-aspartate dehydrogenase from Methanocaldococcus jannaschii (strain ATCC 43067 / DSM 2661 / JAL-1 / JCM 10045 / NBRC 100440) (Methanococcus jannaschii).